A 123-amino-acid chain; its full sequence is UPF0102 protein Cbei_1183 (123 aa).

It belongs to the UPF0102 family.

This chain is UPF0102 protein Cbei_1183, found in Clostridium beijerinckii (strain ATCC 51743 / NCIMB 8052) (Clostridium acetobutylicum).